A 200-amino-acid polypeptide reads, in one-letter code: Interleukin 17-like protein (200 aa).

An N-terminal signal peptide occupies residues 1–26 (MGNFFLFAMTLVVCSVIVLLTGVADS). A glycan (N-linked (GlcNAc...) asparagine) is linked at Asn46. Disulfide bonds link Cys122/Cys175 and Cys127/Cys177. Residue Asn192 is glycosylated (N-linked (GlcNAc...) asparagine).

It belongs to the IL-17 family. As to expression, expressed in several tissues including hemocytes, gills, mantle, adductor muscle, labial palps, digestive glands and heart with highest levels in gills and lowest levels in adductor muscle and heart.

The protein localises to the secreted. The polypeptide is Interleukin 17-like protein (Magallana gigas (Pacific oyster)).